A 127-amino-acid chain; its full sequence is Large ribosomal subunit protein bL20c (127 aa).

Belongs to the bacterial ribosomal protein bL20 family.

It is found in the plastid. The protein localises to the chloroplast. In terms of biological role, binds directly to 23S ribosomal RNA and is necessary for the in vitro assembly process of the 50S ribosomal subunit. It is not involved in the protein synthesizing functions of that subunit. This Jasminum nudiflorum (Winter jasmine) protein is Large ribosomal subunit protein bL20c.